The following is a 158-amino-acid chain: Transcription elongation factor GreA (158 aa).

The stretch at 1–67 (MSNNIPLTKE…FIEGRIQELQ (67 aa)) forms a coiled coil.

This sequence belongs to the GreA/GreB family.

Its function is as follows. Necessary for efficient RNA polymerase transcription elongation past template-encoded arresting sites. The arresting sites in DNA have the property of trapping a certain fraction of elongating RNA polymerases that pass through, resulting in locked ternary complexes. Cleavage of the nascent transcript by cleavage factors such as GreA or GreB allows the resumption of elongation from the new 3'terminus. GreA releases sequences of 2 to 3 nucleotides. This is Transcription elongation factor GreA from Trichlorobacter lovleyi (strain ATCC BAA-1151 / DSM 17278 / SZ) (Geobacter lovleyi).